The chain runs to 152 residues: Coiled-coil domain-containing protein 182 (152 aa).

Residues 46 to 109 (ADLEILQQKV…RLREEEDRGI (64 aa)) are a coiled coil.

This chain is Coiled-coil domain-containing protein 182 (Ccdc182), found in Mus musculus (Mouse).